Consider the following 419-residue polypeptide: Isocitrate dehydrogenase [NADP] (419 aa).

Thr-102 serves as a coordination point for NADP(+). D-threo-isocitrate-binding residues include Ser-111, Asn-113, Arg-117, Arg-127, and Arg-151. Residue Asp-306 participates in Mg(2+) binding. Residues His-338–Tyr-344, Asn-351, Tyr-390, and Arg-394 contribute to the NADP(+) site.

This sequence belongs to the isocitrate and isopropylmalate dehydrogenases family. In terms of assembly, homodimer. Requires Mg(2+) as cofactor. Mn(2+) is required as a cofactor.

It catalyses the reaction D-threo-isocitrate + NADP(+) = 2-oxoglutarate + CO2 + NADPH. In terms of biological role, catalyzes the oxidative decarboxylation of isocitrate to 2-oxoglutarate and carbon dioxide with the concomitant reduction of NADP(+). This is Isocitrate dehydrogenase [NADP] from Haloferax volcanii (strain ATCC 29605 / DSM 3757 / JCM 8879 / NBRC 14742 / NCIMB 2012 / VKM B-1768 / DS2) (Halobacterium volcanii).